The following is a 413-amino-acid chain: Arginine biosynthesis bifunctional protein ArgJ (413 aa).

Substrate-binding residues include T158, K184, T195, E285, N408, and S413. T195 functions as the Nucleophile in the catalytic mechanism.

The protein belongs to the ArgJ family. Heterotetramer of two alpha and two beta chains.

It is found in the cytoplasm. The catalysed reaction is N(2)-acetyl-L-ornithine + L-glutamate = N-acetyl-L-glutamate + L-ornithine. It catalyses the reaction L-glutamate + acetyl-CoA = N-acetyl-L-glutamate + CoA + H(+). The protein operates within amino-acid biosynthesis; L-arginine biosynthesis; L-ornithine and N-acetyl-L-glutamate from L-glutamate and N(2)-acetyl-L-ornithine (cyclic): step 1/1. It functions in the pathway amino-acid biosynthesis; L-arginine biosynthesis; N(2)-acetyl-L-ornithine from L-glutamate: step 1/4. Its function is as follows. Catalyzes two activities which are involved in the cyclic version of arginine biosynthesis: the synthesis of N-acetylglutamate from glutamate and acetyl-CoA as the acetyl donor, and of ornithine by transacetylation between N(2)-acetylornithine and glutamate. This is Arginine biosynthesis bifunctional protein ArgJ from Brucella melitensis biotype 1 (strain ATCC 23456 / CCUG 17765 / NCTC 10094 / 16M).